Reading from the N-terminus, the 593-residue chain is Proteasome-associated ATPase (593 aa).

Positions aspartate 5–proline 94 form a coiled coil. Glycine 281–leucine 286 provides a ligand contact to ATP. The tract at residues glycine 574 to leucine 593 is disordered. Residues glutamate 584–leucine 593 are compositionally biased toward polar residues. Residues tyrosine 592–leucine 593 form a docks into pockets in the proteasome alpha-ring region.

Belongs to the AAA ATPase family. As to quaternary structure, homohexamer. Assembles into a hexameric ring structure that caps the 20S proteasome core. Strongly interacts with the prokaryotic ubiquitin-like protein Pup through a hydrophobic interface; the interacting region of ARC lies in its N-terminal coiled-coil domain. There is one Pup binding site per ARC hexamer ring. Upon ATP-binding, the C-terminus of ARC interacts with the alpha-rings of the proteasome core, possibly by binding to the intersubunit pockets.

It participates in protein degradation; proteasomal Pup-dependent pathway. Its function is as follows. ATPase which is responsible for recognizing, binding, unfolding and translocation of pupylated proteins into the bacterial 20S proteasome core particle. May be essential for opening the gate of the 20S proteasome via an interaction with its C-terminus, thereby allowing substrate entry and access to the site of proteolysis. Thus, the C-termini of the proteasomal ATPase may function like a 'key in a lock' to induce gate opening and therefore regulate proteolysis. The sequence is that of Proteasome-associated ATPase from Salinispora tropica (strain ATCC BAA-916 / DSM 44818 / JCM 13857 / NBRC 105044 / CNB-440).